A 1737-amino-acid polypeptide reads, in one-letter code: Complement C4 (1737 aa).

Positions 1 to 19 (MRLLWGLAWAFSFFASSLQ) are cleaved as a signal peptide. A disulfide bridge connects residues cysteine 66 and cysteine 95. 2 N-linked (GlcNAc...) asparagine glycosylation sites follow: asparagine 224 and asparagine 664. Cysteines 633 and 667 form a disulfide. Residues 674–677 (RQKR) constitute a propeptide that is removed on maturation. 3 disulfides stabilise this stretch: cysteine 700–cysteine 726, cysteine 701–cysteine 733, and cysteine 714–cysteine 734. Residues 700-734 (CCQDGMTKLPMARTCEQRAARVPQPACREPFLSCC) enclose the Anaphylatoxin-like domain. An N-linked (GlcNAc...) asparagine glycan is attached at asparagine 743. Residues 1005-1008 (CAEQ) constitute a cross-link (isoglutamyl cysteine thioester (Cys-Gln)). Asparagine 1323 and asparagine 1386 each carry an N-linked (GlcNAc...) asparagine glycan. Sulfotyrosine is present on residues tyrosine 1412, tyrosine 1414, and tyrosine 1416. Residues 1443 to 1446 (RRRR) constitute a propeptide that is removed on maturation. 5 disulfides stabilise this stretch: cysteine 1464–cysteine 1528, cysteine 1576–cysteine 1581, cysteine 1588–cysteine 1666, cysteine 1611–cysteine 1735, and cysteine 1711–cysteine 1720. In terms of domain architecture, NTR spans 1588–1735 (CPRQRRSLER…FLQEYSSQGC (148 aa)). Tyrosine 1676 is modified (sulfotyrosine).

As to quaternary structure, in absence of complement activation, circulates in blood as a disulfide-linked trimer of an alpha, beta and gamma chain. In terms of assembly, complement C4b is composed of complement C4b-A, complement C4 beta and complement C4 gamma chains that are associated via disulfide bonds. Non-enzymatic component of the C3 convertase, also named C4bC2b, composed of the serine protease complement C2b (C2), as well as complement C4b. Non-enzymatic component of the C5 convertase, also named C4bC2bC3b, composed of the serine protease complement C2b (C2), complement C3b, as well as complement C4b. Post-translationally, prior to secretion, the single-chain precursor is enzymatically cleaved by plasminogen (PLG) to yield non-identical chains alpha, beta and gamma. During activation of the complement systems, the alpha chain is cleaved into C4a and C4b by different proteases depending on the complement pathway: C4b stays linked to the beta and gamma chains, while C4a is released in the plasma. The alpha chain is cleaved by C1S to generate C4a and C4b following activation by the classical complement system. The alpha chain is cleaved to generate C4a and C4b by MASP2 following activation by the lectin complement system. The alpha chain is cleaved by GZMK to generate C4a and C4b following activation by the GZMK complement system. Further degradation of C4b by C1 into the inactive fragments C4c and C4d blocks the generation of C3 convertase. The proteolytic cleavages often are incomplete so that many structural forms can be found in plasma. In terms of processing, upon activation, the internal thioester bond reacts with carbohydrate antigens on the target surface to form amide or ester bonds, leading to covalent association with the surface of pathogens. Complement C4b interacts with complement C3b via a thioester linkage. Post-translationally, N- and O-glycosylated. O-glycosylated with a core 1 or possibly core 8 glycan.

It localises to the secreted. The protein localises to the cell surface. Precursor of non-enzymatic components of the classical, lectin and GZMK complement pathways, which consist in a cascade of proteins that leads to phagocytosis and breakdown of pathogens and signaling that strengthens the adaptive immune system. Functionally, non-enzymatic component of C3 and C5 convertases. Generated following cleavage by complement proteases (C1S, MASP2 or GZMK, depending on the complement pathway), it covalently attaches to the surface of pathogens, where it acts as an opsonin that marks the surface of antigens for removal. It then recruits the serine protease complement C2b to form the C3 and C5 convertases, which cleave and activate C3 and C5, respectively, the next components of the complement pathways. Complement C4b-A isotype is responsible for effective binding to form amide bonds with immune aggregates or protein antigens, while complement C4b-B isotype catalyzes the transacylation of the thioester carbonyl group to form ester bonds with carbohydrate antigens. Its function is as follows. Putative humoral mediator released following cleavage by complement proteases (C1S, MASP2 or GZMK, depending on the complement pathway). While it is strongly similar to anaphylatoxins, its role is unclear. Was reported to act as a mediator of local inflammatory process; however these effects were probably due to contamination with C3a and/C5a anaphylatoxins in biological assays. This is Complement C4 from Rattus norvegicus (Rat).